A 138-amino-acid chain; its full sequence is Large ribosomal subunit protein uL16 (138 aa).

Positions 1–13 (MLQPARRKFRKEQ) are enriched in basic residues. The tract at residues 1 to 22 (MLQPARRKFRKEQKGRNTGLAT) is disordered.

Belongs to the universal ribosomal protein uL16 family. As to quaternary structure, part of the 50S ribosomal subunit.

In terms of biological role, binds 23S rRNA and is also seen to make contacts with the A and possibly P site tRNAs. The polypeptide is Large ribosomal subunit protein uL16 (Thiobacillus denitrificans (strain ATCC 25259 / T1)).